Reading from the N-terminus, the 602-residue chain is NADH-quinone oxidoreductase subunit C/D (602 aa).

The tract at residues M1 to Q192 is NADH dehydrogenase I subunit C. The tract at residues D216 to R602 is NADH dehydrogenase I subunit D.

In the N-terminal section; belongs to the complex I 30 kDa subunit family. The protein in the C-terminal section; belongs to the complex I 49 kDa subunit family. In terms of assembly, NDH-1 is composed of 13 different subunits. Subunits NuoB, CD, E, F, and G constitute the peripheral sector of the complex.

Its subcellular location is the cell inner membrane. The catalysed reaction is a quinone + NADH + 5 H(+)(in) = a quinol + NAD(+) + 4 H(+)(out). Functionally, NDH-1 shuttles electrons from NADH, via FMN and iron-sulfur (Fe-S) centers, to quinones in the respiratory chain. The immediate electron acceptor for the enzyme in this species is believed to be ubiquinone. Couples the redox reaction to proton translocation (for every two electrons transferred, four hydrogen ions are translocated across the cytoplasmic membrane), and thus conserves the redox energy in a proton gradient. The protein is NADH-quinone oxidoreductase subunit C/D of Klebsiella pneumoniae subsp. pneumoniae (strain ATCC 700721 / MGH 78578).